A 238-amino-acid chain; its full sequence is Aspartate/glutamate leucyltransferase (238 aa).

It belongs to the R-transferase family. Bpt subfamily.

It localises to the cytoplasm. The enzyme catalyses N-terminal L-glutamyl-[protein] + L-leucyl-tRNA(Leu) = N-terminal L-leucyl-L-glutamyl-[protein] + tRNA(Leu) + H(+). It carries out the reaction N-terminal L-aspartyl-[protein] + L-leucyl-tRNA(Leu) = N-terminal L-leucyl-L-aspartyl-[protein] + tRNA(Leu) + H(+). Functionally, functions in the N-end rule pathway of protein degradation where it conjugates Leu from its aminoacyl-tRNA to the N-termini of proteins containing an N-terminal aspartate or glutamate. The chain is Aspartate/glutamate leucyltransferase from Aeromonas hydrophila subsp. hydrophila (strain ATCC 7966 / DSM 30187 / BCRC 13018 / CCUG 14551 / JCM 1027 / KCTC 2358 / NCIMB 9240 / NCTC 8049).